The primary structure comprises 156 residues: Arginine repressor (156 aa).

Belongs to the ArgR family.

The protein resides in the cytoplasm. It participates in amino-acid biosynthesis; L-arginine biosynthesis [regulation]. Its function is as follows. Regulates arginine biosynthesis genes. The sequence is that of Arginine repressor from Klebsiella pneumoniae (strain 342).